The sequence spans 1004 residues: Ovochymase-2 (1004 aa).

An N-terminal signal peptide occupies residues 1–19; sequence MPTRNLLLGSILLSLAVKG. Residues 20–45 constitute a propeptide, activation peptide; sequence DPGPHRGARCGVSPLGSATELNYLSR. In terms of domain architecture, Peptidase S1 1 spans 46–295; that stretch reads IVGGRESKKG…LLGWVSSQLN (250 aa). Cys-71 and Cys-87 are oxidised to a cystine. His-86 functions as the Charge relay system in the catalytic mechanism. Position 113 (Glu-113) interacts with Ca(2+). Asn-128 carries N-linked (GlcNAc...) asparagine glycosylation. The Charge relay system role is filled by Asp-136. 3 disulfide bridges follow: Cys-170-Cys-240, Cys-201-Cys-219, and Cys-230-Cys-259. The active-site Charge relay system is the Ser-234. 2 consecutive CUB domains span residues 309 to 419 and 429 to 541; these read QDGV…YSAV and CGSF…FTFV. Asn-351 carries an N-linked (GlcNAc...) asparagine glycan. Cys-363 and Cys-382 form a disulfide bridge. N-linked (GlcNAc...) asparagine glycosylation is present at Asn-408. Disulfide bonds link Cys-429–Cys-456 and Cys-483–Cys-504. A compositionally biased stretch (polar residues) spans 547–558; the sequence is VEDSRQGNMPST. The segment at 547 to 566 is disordered; it reads VEDSRQGNMPSTNKKETTAQ. In terms of domain architecture, Peptidase S1 2 spans 580–820; sequence IYNSIAKVEE…FIDWIRQIMS (241 aa). Positions 584–1004 are cleaved as a propeptide — activation peptide; it reads IAKVEEAVPH…VVPDSDSSEP (421 aa). Intrachain disulfides connect Cys-609–Cys-625, Cys-706–Cys-776, Cys-737–Cys-754, and Cys-766–Cys-796. A glycan (N-linked (GlcNAc...) asparagine) is linked at Asn-763. Asn-940 carries N-linked (GlcNAc...) asparagine glycosylation.

It belongs to the peptidase S1 family. Post-translationally, the catalytically inactive 110 kDa form is processed both N- and C-terminally to give rise to the 66 kDa catalytically active form. Specifically expressed in the pars recta oviduct.

The protein resides in the secreted. The enzyme catalyses Preferential cleavage at 371-Gly-Ser-Arg-|-Trp-374 of glycoprotein gp43 in Xenopus laevis coelemic egg envelope to yield gp41.. Converts the glycoprotein envelope surrounding the egg from an unfertilizable to a fertilizable form during its transit through the pars recta portion of the oviduct by selectively hydrolyzing the envelope glycoprotein gp43. The egg envelope is converted to a sperm-penetrable form, via an increase in sperm binding. The protein is Ovochymase-2 (ovch2) of Xenopus laevis (African clawed frog).